Consider the following 587-residue polypeptide: Phosphatidate phosphatase APP1 (587 aa).

Disordered stretches follow at residues 1 to 28 and 150 to 178; these read MNSQ…RMGK and PPHL…SENR. Low complexity-rich tracts occupy residues 9–22 and 163–174; these read SSSS…PTSG and SQSSIESSLSSK. A DXDXT motif motif is present at residues 281-285; that stretch reads DIDDT. The interval 452-521 is disordered; that stretch reads QQRPMQMTKS…NRQLPNLDAN (70 aa). The interaction with SH3 domain of ABP1 stretch occupies residues 467-483; that stretch reads RRPPPPPIPSTQKPSLT.

In terms of assembly, monomer. Interacts with ABP1. The cofactor is Mg(2+). N-glycosylated.

It is found in the cytoplasm. It localises to the cytoskeleton. The protein localises to the actin patch. It carries out the reaction a 1,2-diacyl-sn-glycero-3-phosphate + H2O = a 1,2-diacyl-sn-glycerol + phosphate. The enzyme catalyses 1,2-di-(9Z-octadecenoyl)-sn-glycero-3-phosphate + H2O = 1,2-di-(9Z-octadecenoyl)-sn-glycerol + phosphate. Its activity is regulated as follows. Inhibited by N-ethylmaleimide. Mg(2+)-dependent phosphatidate (PA) phosphatase which catalyzes the dephosphorylation of PA to yield diacylglycerol. May play a role in vesicular trafficking through its PAP activity at cortical actin patches. Can also utilize diacylglycerol pyrophosphate and lyso-PA as substrates with specificity constants 4- and 7-fold lower, respectively, when compared with PA. The sequence is that of Phosphatidate phosphatase APP1 (APP1) from Saccharomyces cerevisiae (strain ATCC 204508 / S288c) (Baker's yeast).